Consider the following 95-residue polypeptide: Large ribosomal subunit protein bL28 (95 aa).

Residues 1-28 are disordered; the sequence is MARKRTLGGKAPQAGNKVSHSQRKTRRQ.

Belongs to the bacterial ribosomal protein bL28 family.

The protein is Large ribosomal subunit protein bL28 of Magnetococcus marinus (strain ATCC BAA-1437 / JCM 17883 / MC-1).